The sequence spans 139 residues: Nucleoside diphosphate kinase (139 aa).

6 residues coordinate ATP: lysine 10, phenylalanine 58, arginine 86, threonine 92, arginine 104, and asparagine 114. The active-site Pros-phosphohistidine intermediate is the histidine 117.

It belongs to the NDK family. In terms of assembly, homotetramer. Requires Mg(2+) as cofactor.

It localises to the cytoplasm. The enzyme catalyses a 2'-deoxyribonucleoside 5'-diphosphate + ATP = a 2'-deoxyribonucleoside 5'-triphosphate + ADP. The catalysed reaction is a ribonucleoside 5'-diphosphate + ATP = a ribonucleoside 5'-triphosphate + ADP. Functionally, major role in the synthesis of nucleoside triphosphates other than ATP. The ATP gamma phosphate is transferred to the NDP beta phosphate via a ping-pong mechanism, using a phosphorylated active-site intermediate. The protein is Nucleoside diphosphate kinase of Nocardia farcinica (strain IFM 10152).